A 183-amino-acid polypeptide reads, in one-letter code: ATP-dependent protease subunit HslV (183 aa).

Thr13 is an active-site residue. Na(+) contacts are provided by Gly168, Cys171, and Thr174.

This sequence belongs to the peptidase T1B family. HslV subfamily. In terms of assembly, a double ring-shaped homohexamer of HslV is capped on each side by a ring-shaped HslU homohexamer. The assembly of the HslU/HslV complex is dependent on binding of ATP.

Its subcellular location is the cytoplasm. The catalysed reaction is ATP-dependent cleavage of peptide bonds with broad specificity.. With respect to regulation, allosterically activated by HslU binding. In terms of biological role, protease subunit of a proteasome-like degradation complex believed to be a general protein degrading machinery. The polypeptide is ATP-dependent protease subunit HslV (Xylella fastidiosa (strain M23)).